The following is a 180-amino-acid chain: Ribulose bisphosphate carboxylase small subunit, chloroplastic 2 (180 aa).

The transit peptide at 1–56 (MASSVMSSAAVATSTNAAQASMVAPFTGLKSAASFPVSRKQNLDITSIASNGGRVQ) directs the protein to the chloroplast.

It belongs to the RuBisCO small chain family. As to quaternary structure, heterohexadecamer of 8 large and 8 small subunits.

The protein localises to the plastid. Its subcellular location is the chloroplast. RuBisCO catalyzes two reactions: the carboxylation of D-ribulose 1,5-bisphosphate, the primary event in carbon dioxide fixation, as well as the oxidative fragmentation of the pentose substrate. Both reactions occur simultaneously and in competition at the same active site. Although the small subunit is not catalytic it is essential for maximal activity. This chain is Ribulose bisphosphate carboxylase small subunit, chloroplastic 2, found in Petunia hybrida (Petunia).